Reading from the N-terminus, the 878-residue chain is Phosphoenolpyruvate carboxylase (878 aa).

Active-site residues include His-138 and Lys-545.

This sequence belongs to the PEPCase type 1 family. Mg(2+) is required as a cofactor.

It catalyses the reaction oxaloacetate + phosphate = phosphoenolpyruvate + hydrogencarbonate. In terms of biological role, forms oxaloacetate, a four-carbon dicarboxylic acid source for the tricarboxylic acid cycle. This Shewanella loihica (strain ATCC BAA-1088 / PV-4) protein is Phosphoenolpyruvate carboxylase.